Consider the following 369-residue polypeptide: 4-hydroxy-3-methylbut-2-en-1-yl diphosphate synthase (flavodoxin) (369 aa).

Positions 270, 273, 305, and 312 each coordinate [4Fe-4S] cluster.

It belongs to the IspG family. The cofactor is [4Fe-4S] cluster.

It carries out the reaction (2E)-4-hydroxy-3-methylbut-2-enyl diphosphate + oxidized [flavodoxin] + H2O + 2 H(+) = 2-C-methyl-D-erythritol 2,4-cyclic diphosphate + reduced [flavodoxin]. It participates in isoprenoid biosynthesis; isopentenyl diphosphate biosynthesis via DXP pathway; isopentenyl diphosphate from 1-deoxy-D-xylulose 5-phosphate: step 5/6. Functionally, converts 2C-methyl-D-erythritol 2,4-cyclodiphosphate (ME-2,4cPP) into 1-hydroxy-2-methyl-2-(E)-butenyl 4-diphosphate. The polypeptide is 4-hydroxy-3-methylbut-2-en-1-yl diphosphate synthase (flavodoxin) (Pseudomonas savastanoi pv. phaseolicola (strain 1448A / Race 6) (Pseudomonas syringae pv. phaseolicola (strain 1448A / Race 6))).